The chain runs to 401 residues: Ascaroside receptor GPR3 (401 aa).

Over 1–16 (MQPFGDAWSQRHLAGV) the chain is Extracellular. A helical transmembrane segment spans residues 17-37 (VLAGSVLSIVGSLYMILGFFF). Residues 38-47 (LRECRSFRHK) are Cytoplasmic-facing. The chain crosses the membrane as a helical span at residues 48–68 (LILGLAVSDLLLALNFFIPSL). Residues 69 to 93 (SMVTGREISSPWNEGFCSANGFLMQ) are Extracellular-facing. A disulfide bridge connects residues cysteine 85 and cysteine 159. The chain crosses the membrane as a helical span at residues 94-114 (LFFAQIDVWQISIALITLLML). The Cytoplasmic segment spans residues 115-128 (SGPSMVLKWIRENV). A helical transmembrane segment spans residues 129–149 (WAVWLFPWLVSLIAAFFAFGF). Residues 150 to 175 (WDYANVGGFCWLGSRNIRLYFNYIPR) are Extracellular-facing. A helical membrane pass occupies residues 176-196 (WIIILVCLVIYIAVYRLILHA). Residues 197 to 294 (RRRANIQKTY…QKQVRKIAIQ (98 aa)) are Cytoplasmic-facing. Positions 206–259 (YRGRASDRAPPQPVTTTAPATNPESEKVNPDEISSGNGSSSLDTSRSGSSTGFT) are disordered. Residues 239 to 257 (SSGNGSSSLDTSRSGSSTG) show a composition bias toward low complexity. Residues 295-315 (MISYPLAYAVLWAIPTIVMII) form a helical membrane-spanning segment. Over 316–321 (QVARGG) the chain is Extracellular. A helical transmembrane segment spans residues 322-342 (EGVSIHVEGLAKMLLVFNGFV). Residues 343 to 401 (DAHVYGFNERTAMGWRQRIRPAAQEDDEEAAGTSGGVHEVVSRPEPTLKNPNVWQQNMV) lie on the Cytoplasmic side of the membrane. Residues 362-401 (RPAAQEDDEEAAGTSGGVHEVVSRPEPTLKNPNVWQQNMV) are disordered. Polar residues predominate over residues 391-401 (KNPNVWQQNMV).

The protein belongs to the G-protein coupled receptor 1 family. As to quaternary structure, interacts with ascaroside receptor GPR2; may form a functional heterodimer. Interacts with guanine nucleotide-binding protein alpha GPA2; to activate adenylate cyclase and positively regulate nematode trap formation.

The protein resides in the cell membrane. Functionally, g protein-coupled receptor that senses nematode ascaroside pheromones and signals via adenylate cyclase to positively regulate trap formation for nematode capture. In Arthrobotrys oligospora (strain ATCC 24927 / CBS 115.81 / DSM 1491) (Nematode-trapping fungus), this protein is Ascaroside receptor GPR3.